The following is a 155-amino-acid chain: Fibroblast growth factor 1 (155 aa).

Residues 1–15 constitute a propeptide that is removed on maturation; sequence MAEGEITTFTALTER. Asn-33 lines the heparin pocket. Residues 127–143 are heparin-binding; sequence KKNGNSKLGPRTHYGQK.

The protein belongs to the heparin-binding growth factors family.

Its subcellular location is the secreted. The protein localises to the cytoplasm. It is found in the cell cortex. It localises to the cytosol. The protein resides in the nucleus. Functionally, plays an important role in the regulation of cell survival, cell division, angiogenesis, cell differentiation and cell migration. Functions as a potent mitogen in vitro. Acts as a ligand for FGFR1 and integrins. Binds to FGFR1 in the presence of heparin leading to FGFR1 dimerization and activation via sequential autophosphorylation on tyrosine residues which act as docking sites for interacting proteins, leading to the activation of several signaling cascades. Binds to integrins. Its binding to integrins and subsequent ternary complex formation with integrins and FGFR1 are essential for FGF1 signaling. In Gallus gallus (Chicken), this protein is Fibroblast growth factor 1 (FGF1).